The following is a 544-amino-acid chain: DNA mismatch repair protein MutL (544 aa).

It belongs to the DNA mismatch repair MutL/HexB family.

In terms of biological role, this protein is involved in the repair of mismatches in DNA. It is required for dam-dependent methyl-directed DNA mismatch repair. May act as a 'molecular matchmaker', a protein that promotes the formation of a stable complex between two or more DNA-binding proteins in an ATP-dependent manner without itself being part of a final effector complex. The polypeptide is DNA mismatch repair protein MutL (Thermodesulfovibrio yellowstonii (strain ATCC 51303 / DSM 11347 / YP87)).